Here is a 494-residue protein sequence, read N- to C-terminus: GPI alpha-1,6-mannosyltransferase 2 (494 aa).

Residues methionine 1–arginine 13 lie on the Cytoplasmic side of the membrane. Residues phenylalanine 14–proline 34 form a helical membrane-spanning segment. Residues aspartate 35–histidine 77 are Lumenal-facing. Residues glycine 78–glycine 98 form a helical membrane-spanning segment. Over threonine 99–serine 113 the chain is Cytoplasmic. The chain crosses the membrane as a helical span at residues cysteine 114–leucine 134. Over histidine 135 to aspartate 136 the chain is Lumenal. Residues leucine 137–leucine 157 traverse the membrane as a helical segment. The Cytoplasmic segment spans residues serine 158–asparagine 161. Residues valine 162–glycine 182 traverse the membrane as a helical segment. At glutamine 183–serine 192 the chain is on the lumenal side. Residues glycine 193 to leucine 213 traverse the membrane as a helical segment. Residues leucine 214–leucine 234 are Cytoplasmic-facing. The helical transmembrane segment at phenylalanine 235–phenylalanine 255 threads the bilayer. The Lumenal segment spans residues glutamine 256–asparagine 327. The helical transmembrane segment at phenylalanine 328–threonine 348 threads the bilayer. Residues histidine 349–lysine 379 lie on the Cytoplasmic side of the membrane. A helical transmembrane segment spans residues valine 380 to valine 400. Topologically, residues glutamine 401–arginine 470 are lumenal. Residues cysteine 471–leucine 491 form a helical membrane-spanning segment. At proline 492–threonine 494 the chain is on the cytoplasmic side.

Belongs to the PIGV family. Post-translationally, not N-glycosylated.

The protein resides in the endoplasmic reticulum membrane. It functions in the pathway glycolipid biosynthesis; glycosylphosphatidylinositol-anchor biosynthesis. Functionally, alpha-1,6-mannosyltransferase that catalyzes the transfer of the second mannose, via an alpha-1,6 bond, from a dolichol-phosphate-mannose (Dol-P-Man) to the alpha-D-Man-(1-&gt;4)-alpha-D-GlcN-(1-&gt;6)-(1-radyl,2-acyl-sn-glycero-3-phospho)-2-acyl-inositol intermediate to generate an alpha-D-Man-(1-&gt;6)-alpha-D-Man-(1-&gt;4)-alpha-D-GlcN-(1-&gt;6)-(1-radyl,2-acyl-sn-glycero-3-phospho)-2-acyl-inositol and participates in the seventh step of the glycosylphosphatidylinositol-anchor biosynthesis. Also transfers the second mannose on a 2-PEtn-alpha-D-Man-(1-&gt;4)-alpha-D-GlcN-(1-&gt;6)-(1-radyl,2-acyl-sn-glycero-3-phospho)-2-acyl-inositol. In Cricetulus griseus (Chinese hamster), this protein is GPI alpha-1,6-mannosyltransferase 2.